The chain runs to 212 residues: MDPVVLSYMDSLLRQSDVSLLDPPSWLNDHIIGFAFEYFANSQFHDCSDHVSFISPEVTQFIKCTSNPAEIAMFLEPLDLPNKRVVFLAINDNSNQAAGGTHWSLLVYLQDKNSFFHYDSHSRSNSVHAKQVAEKLEAFLGRKGDKLAFVEEKAPAQQNSYDCGMYVICNTEALCQNFFRQQTESLLQLLTPAYITKKRGEWKDLITTLAKK.

M1 is modified (N-acetylmethionine). Positions 11-174 (SLLRQSDVSL…MYVICNTEAL (164 aa)) are protease. Active-site residues include H102 and D119. The active-site Nucleophile is C163.

It belongs to the peptidase C48 family. As to expression, broadly expressed, with highest levels in kidney and pancreas.

Functionally, protease that catalyzes two essential functions in the NEDD8 pathway: processing of full-length NEDD8 to its mature form and deconjugation of NEDD8 from targeted proteins such as cullins or p53. This Homo sapiens (Human) protein is Sentrin-specific protease 8 (SENP8).